The following is a 263-amino-acid chain: Small ribosomal subunit protein eS4 (263 aa).

An S4 RNA-binding domain is found at 42-104 (LPLIIFLRNR…TGENFRLIYD (63 aa)).

Belongs to the eukaryotic ribosomal protein eS4 family.

In Ictalurus punctatus (Channel catfish), this protein is Small ribosomal subunit protein eS4 (rps4).